The primary structure comprises 400 residues: Nicotinate phosphoribosyltransferase (400 aa).

The residue at position 220 (histidine 220) is a Phosphohistidine; by autocatalysis.

Belongs to the NAPRTase family. In terms of processing, transiently phosphorylated on a His residue during the reaction cycle. Phosphorylation strongly increases the affinity for substrates and increases the rate of nicotinate D-ribonucleotide production. Dephosphorylation regenerates the low-affinity form of the enzyme, leading to product release.

The catalysed reaction is nicotinate + 5-phospho-alpha-D-ribose 1-diphosphate + ATP + H2O = nicotinate beta-D-ribonucleotide + ADP + phosphate + diphosphate. Its pathway is cofactor biosynthesis; NAD(+) biosynthesis; nicotinate D-ribonucleotide from nicotinate: step 1/1. Its function is as follows. Catalyzes the synthesis of beta-nicotinate D-ribonucleotide from nicotinate and 5-phospho-D-ribose 1-phosphate at the expense of ATP. The chain is Nicotinate phosphoribosyltransferase from Salmonella agona (strain SL483).